A 119-amino-acid chain; its full sequence is Methylglyoxal synthase (119 aa).

Positions 1–119 constitute an MGS-like domain; that stretch reads MRIALIAHDK…GTADLIIKQF (119 aa). Substrate contacts are provided by residues histidine 8, lysine 12, 34 to 37, and 54 to 55; these read TGTT and SG. Aspartate 60 serves as the catalytic Proton donor/acceptor. Histidine 87 contributes to the substrate binding site.

The protein belongs to the methylglyoxal synthase family.

It carries out the reaction dihydroxyacetone phosphate = methylglyoxal + phosphate. In terms of biological role, catalyzes the formation of methylglyoxal from dihydroxyacetone phosphate. This is Methylglyoxal synthase from Clostridium botulinum (strain Eklund 17B / Type B).